Here is a 623-residue protein sequence, read N- to C-terminus: Lamin-B2.L (623 aa).

A compositionally biased stretch (low complexity) spans Met-1 to Ala-18. The interval Met-1–Ile-30 is disordered. Residues Ala-2 to Pro-27 form a head region. Polar residues predominate over residues Arg-19 to Ile-30. The residue at position 26 (Ser-26) is a Phosphoserine. The interval Thr-28 to Met-64 is coil 1A. The 357-residue stretch at Glu-35 to Leu-391 folds into the IF rod domain. The linker 1 stretch occupies residues Met-64–Thr-74. Residues Thr-75 to Arg-211 form a coil 1B region. The interval Lys-212–Arg-235 is linker 2. Positions Gly-236–Asn-378 are coil 2. Residues Tyr-380–Glu-592 are tail. 2 disordered regions span residues Glu-388 to Gln-473 and Val-591 to Met-623. Ser-396 bears the Phosphoserine mark. Residues Glu-398–Thr-416 are compositionally biased toward low complexity. Positions Lys-420–Glu-425 match the Nuclear localization signal motif. Positions Leu-443–Gln-473 are enriched in polar residues. The 118-residue stretch at Phe-468–Lys-585 folds into the LTD domain. The segment covering Glu-592–Glu-604 has biased composition (acidic residues). Polar residues predominate over residues Asp-612–Met-623. Cys-620 carries the cysteine methyl ester modification. Cys-620 carries the S-farnesyl cysteine lipid modification. Positions Ser-621 to Met-623 are cleaved as a propeptide — removed in mature form.

Belongs to the intermediate filament family. In terms of processing, phosphorylation plays a key role in lamin organization, subcellular localization and nuclear envelope disintegration. Phosphorylation by CDK1 at Ser-26 at the onset of mitosis drives lamin disassembly and nuclear envelope breakdown.

It localises to the nucleus lamina. Its subcellular location is the nucleus envelope. It is found in the nucleus. The protein localises to the nucleoplasm. The protein resides in the nucleus matrix. Its function is as follows. Lamins are intermediate filament proteins that assemble into a filamentous meshwork, and which constitute the major components of the nuclear lamina, a fibrous layer on the nucleoplasmic side of the inner nuclear membrane. Lamins provide a framework for the nuclear envelope, bridging the nuclear envelope and chromatin, thereby playing an important role in nuclear assembly, chromatin organization, nuclear membrane and telomere dynamics. The structural integrity of the lamina is strictly controlled by the cell cycle, as seen by the disintegration and formation of the nuclear envelope in prophase and telophase, respectively. The polypeptide is Lamin-B2.L (lmnb2.L) (Xenopus laevis (African clawed frog)).